A 316-amino-acid chain; its full sequence is Ribosomal RNA small subunit methyltransferase H (316 aa).

S-adenosyl-L-methionine contacts are provided by residues 35-37 (GGH), D55, F79, D101, and Q108. The tract at residues 291 to 316 (AIKPSKDEVDENTRSRSSVLRIAEKL) is disordered. Basic and acidic residues predominate over residues 294-304 (PSKDEVDENTR).

The protein belongs to the methyltransferase superfamily. RsmH family.

It localises to the cytoplasm. It catalyses the reaction cytidine(1402) in 16S rRNA + S-adenosyl-L-methionine = N(4)-methylcytidine(1402) in 16S rRNA + S-adenosyl-L-homocysteine + H(+). Functionally, specifically methylates the N4 position of cytidine in position 1402 (C1402) of 16S rRNA. The sequence is that of Ribosomal RNA small subunit methyltransferase H from Vibrio atlanticus (strain LGP32) (Vibrio splendidus (strain Mel32)).